A 253-amino-acid chain; its full sequence is Triosephosphate isomerase (253 aa).

8–10 (NWK) serves as a coordination point for substrate. His-93 serves as the catalytic Electrophile. Glu-165 functions as the Proton acceptor in the catalytic mechanism. Residues Gly-171, Ser-210, and 231–232 (GG) contribute to the substrate site.

The protein belongs to the triosephosphate isomerase family. Homodimer.

Its subcellular location is the cytoplasm. The catalysed reaction is D-glyceraldehyde 3-phosphate = dihydroxyacetone phosphate. Its pathway is carbohydrate biosynthesis; gluconeogenesis. It functions in the pathway carbohydrate degradation; glycolysis; D-glyceraldehyde 3-phosphate from glycerone phosphate: step 1/1. Its function is as follows. Involved in the gluconeogenesis. Catalyzes stereospecifically the conversion of dihydroxyacetone phosphate (DHAP) to D-glyceraldehyde-3-phosphate (G3P). The chain is Triosephosphate isomerase from Francisella tularensis subsp. holarctica (strain FTNF002-00 / FTA).